Consider the following 299-residue polypeptide: tRNA-cytidine(32) 2-sulfurtransferase (299 aa).

The PP-loop motif signature appears at 56–61 (SGGKDS). Positions 131, 134, and 222 each coordinate [4Fe-4S] cluster.

It belongs to the TtcA family. Homodimer. Requires Mg(2+) as cofactor. The cofactor is [4Fe-4S] cluster.

The protein resides in the cytoplasm. It catalyses the reaction cytidine(32) in tRNA + S-sulfanyl-L-cysteinyl-[cysteine desulfurase] + AH2 + ATP = 2-thiocytidine(32) in tRNA + L-cysteinyl-[cysteine desulfurase] + A + AMP + diphosphate + H(+). It participates in tRNA modification. Catalyzes the ATP-dependent 2-thiolation of cytidine in position 32 of tRNA, to form 2-thiocytidine (s(2)C32). The sulfur atoms are provided by the cysteine/cysteine desulfurase (IscS) system. The protein is tRNA-cytidine(32) 2-sulfurtransferase of Xylella fastidiosa (strain M23).